The sequence spans 598 residues: Nuclear receptor subfamily 4 group A member 2 (598 aa).

Residues 1–22 form a disordered region; sequence MPCVQAQYGSSPQGASPASQSY. Residues 8–22 are compositionally biased toward low complexity; sequence YGSSPQGASPASQSY. Positions 260–335 form a DNA-binding region, nuclear receptor; sequence EGLCAVCGDN…VGMVKEVVRT (76 aa). 2 NR C4-type zinc fingers span residues 263 to 283 and 299 to 318; these read CAVC…CEGC and CLAN…CQYC. A Bipartite nuclear localization signal (NLS1) motif is present at residues 287-314; the sequence is FKRTVQKNAKYVCLANKNCPVDKRRRNR. The interval 337-361 is disordered; it reads SLKGRRGRLPSKPKSPQEPSPPSPP. The Nuclear localization signal (NLS1) motif lies at 338-350; that stretch reads LKGRRGRLPSKPK. Residues 352–361 show a composition bias toward pro residues; that stretch reads PQEPSPPSPP. In terms of domain architecture, NR LBD spans 360 to 595; it reads PPVSLISALV…AIIDKLFLDT (236 aa). Positions 443 to 452 match the nuclear export sequence (NES1) motif; sequence FLELFVLRLA. The nuclear export sequence (NES2) motif lies at 568–577; it reads QGLQRIFYLK.

It belongs to the nuclear hormone receptor family. NR4 subfamily. As to quaternary structure, interacts with SFPQ, NCOR2, SIN3A and HADC1. The interaction with NCOR2 increases in the absence of PITX3. Interacts with PER2.

It localises to the cytoplasm. Its subcellular location is the nucleus. Transcriptional regulator which is important for the differentiation and maintenance of meso-diencephalic dopaminergic (mdDA) neurons during development. It is crucial for expression of a set of genes such as SLC6A3, SLC18A2, TH and DRD2 which are essential for development of mdDA neurons. The protein is Nuclear receptor subfamily 4 group A member 2 (NR4A2) of Bos taurus (Bovine).